The chain runs to 276 residues: Bis(5'-nucleosyl)-tetraphosphatase, symmetrical (276 aa).

This sequence belongs to the Ap4A hydrolase family.

The enzyme catalyses P(1),P(4)-bis(5'-adenosyl) tetraphosphate + H2O = 2 ADP + 2 H(+). Hydrolyzes diadenosine 5',5'''-P1,P4-tetraphosphate to yield ADP. The chain is Bis(5'-nucleosyl)-tetraphosphatase, symmetrical from Tolumonas auensis (strain DSM 9187 / NBRC 110442 / TA 4).